Consider the following 399-residue polypeptide: Serine/threonine-protein kinase PKZ1 (399 aa).

The interval proline 30–arginine 50 is disordered. The region spanning tryptophan 92 to methionine 371 is the Protein kinase domain. Residues isoleucine 98–valine 106 and lysine 121 each bind ATP. Aspartate 219 (proton acceptor) is an active-site residue.

Belongs to the protein kinase superfamily. CAMK Ser/Thr protein kinase family. In terms of assembly, interacts with BZP1.

It catalyses the reaction L-seryl-[protein] + ATP = O-phospho-L-seryl-[protein] + ADP + H(+). The catalysed reaction is L-threonyl-[protein] + ATP = O-phospho-L-threonyl-[protein] + ADP + H(+). Its function is as follows. May regulate an early stage of the zoospore pathway. The chain is Serine/threonine-protein kinase PKZ1 from Phytophthora infestans (Potato late blight agent).